Reading from the N-terminus, the 260-residue chain is Snake venom serine protease homolog KN7 (260 aa).

The N-terminal stretch at 1–18 (MVLIRVLANLLILQLSYA) is a signal peptide. Positions 19 to 24 (QKSSEL) are excised as a propeptide. The Peptidase S1 domain occupies 25-251 (IIGGDECNIN…HLDWIKSIIA (227 aa)). Cystine bridges form between C31-C165, C52-C68, C100-C258, C144-C212, C176-C191, and C202-C227. 3 N-linked (GlcNAc...) asparagine glycosylation sites follow: N83, N123, and N124.

This sequence belongs to the peptidase S1 family. Snake venom subfamily. In terms of tissue distribution, expressed by the venom gland.

It localises to the secreted. Its function is as follows. Snake venom serine protease homolog that may act in the hemostasis system of the prey. The protein is Snake venom serine protease homolog KN7 of Trimeresurus stejnegeri (Chinese green tree viper).